We begin with the raw amino-acid sequence, 356 residues long: Protein translocase subunit SecY (356 aa).

8 consecutive transmembrane segments (helical) span residues 24–44 (LFVI…IPGI), 77–97 (IFAL…LLTV), 125–145 (LVLA…MPGM), 154–174 (FAFY…LMWL), 183–203 (IGNG…PPAV), 217–237 (FLLL…VVFI), 274–294 (VIPA…ASWF), and 317–337 (YVLL…ALVF).

It belongs to the SecY/SEC61-alpha family. In terms of assembly, component of the Sec protein translocase complex. Heterotrimer consisting of SecY, SecE and SecG subunits. The heterotrimers can form oligomers, although 1 heterotrimer is thought to be able to translocate proteins. Interacts with the ribosome. Interacts with SecDF, and other proteins may be involved. Interacts with SecA.

It is found in the cell membrane. Functionally, the central subunit of the protein translocation channel SecYEG. Consists of two halves formed by TMs 1-5 and 6-10. These two domains form a lateral gate at the front which open onto the bilayer between TMs 2 and 7, and are clamped together by SecE at the back. The channel is closed by both a pore ring composed of hydrophobic SecY resides and a short helix (helix 2A) on the extracellular side of the membrane which forms a plug. The plug probably moves laterally to allow the channel to open. The ring and the pore may move independently. The polypeptide is Protein translocase subunit SecY (Buchnera aphidicola subsp. Acyrthosiphon kondoi (Acyrthosiphon kondoi symbiotic bacterium)).